The primary structure comprises 165 residues: Regulator of sigma D (165 aa).

This sequence belongs to the Rsd/AlgQ family. Interacts with RpoD.

The protein resides in the cytoplasm. Its function is as follows. Binds RpoD and negatively regulates RpoD-mediated transcription activation by preventing the interaction between the primary sigma factor RpoD with the catalytic core of the RNA polymerase and with promoter DNA. May be involved in replacement of the RNA polymerase sigma subunit from RpoD to RpoS during the transition from exponential growth to the stationary phase. The sequence is that of Regulator of sigma D from Enterobacter sp. (strain 638).